The sequence spans 192 residues: Natural cytotoxicity triggering receptor 3 (192 aa).

Residues 1–18 (MAKVLLIVFIMVYAGSCA) form the signal peptide. The Ig-like domain maps to 19–126 (IWVSQPPEIR…VGTGNGTRLV (108 aa)). Residues 19–147 (IWVSQPPEIR…AEPERAAYTS (129 aa)) are Extracellular-facing. Cys-39 and Cys-108 are disulfide-bonded. 2 N-linked (GlcNAc...) asparagine glycosylation sites follow: Asn-42 and Asn-121. Residues 148-168 (LLLRAGVYALSFLSVATGSVI) form a helical membrane-spanning segment. Residues 169–192 (YYQGKCLCHVGNTATPPTASEERF) lie on the Cytoplasmic side of the membrane.

It belongs to the natural cytotoxicity receptor (NCR) family. In terms of assembly, homodimer in the unliganted form. Interacts with CD3Z. Interacts with and is activated by binding to NCR3LG1. Interacts with and is activated by binding to BAG6. Interacts with and is inhibited by binding to LGALS3.

Its subcellular location is the cell membrane. In terms of biological role, cell membrane receptor of natural killer/NK cells that is activated by binding of extracellular ligands including BAG6 and NCR3LG1. Stimulates NK cells cytotoxicity toward neighboring cells producing these ligands. It controls, for instance, NK cells cytotoxicity against tumor cells. Engagement of NCR3 by BAG6 also promotes myeloid dendritic cells (DC) maturation, both through killing DCs that did not acquire a mature phenotype, and inducing the release by NK cells of TNFA and IFNG that promote DC maturation. This Rattus norvegicus (Rat) protein is Natural cytotoxicity triggering receptor 3 (Ncr3).